Here is a 353-residue protein sequence, read N- to C-terminus: MGLCQSAEDKELTLKSKAIDKEMMQNHMSQQKVVKLLLLGAGECGKSTVLKQMRILHDHGFTAEEAEQQKSVVFNNTLQAMTAILKGMEALRMTFDKPIRENDAKFVMESHKMLQEAKVFPEELANAIQALWNDKAVQQVIAKGNEFQMPESAPHFLSSLDRIKLPDYNPTEQDILLSRIKTTGIVEVKFQMKSVDFRVFDVGGQRSERKKWIHCFEDVNAIIFIAAISEYDQVLFEDETTNRMIESMRLFESICNSRWFINTSMILFLNKKDLFAEKIKRTSIKSAFPDYKGAQTYDESCRYIEEKFDGLNANPEKTIYMHQTCATDTDQVQMILDSVIDMIIQANLQGCGL.

The N-myristoyl glycine moiety is linked to residue Gly2. A lipid anchor (S-palmitoyl cysteine) is attached at Cys4. A G-alpha domain is found at 32–353 (KVVKLLLLGA…IQANLQGCGL (322 aa)). The segment at 35–48 (KLLLLGAGECGKST) is G1 motif. GTP is bound by residues 40–47 (GAGECGKS), 176–182 (LLSRIKT), 201–205 (DVGGQ), 270–273 (NKKD), and Ala326. Residues Ser47 and Thr182 each contribute to the Mg(2+) site. Positions 174–182 (DILLSRIKT) are G2 motif. Positions 197 to 206 (FRVFDVGGQR) are G3 motif. Residues 266–273 (ILFLNKKD) form a G4 motif region. The tract at residues 324–329 (TCATDT) is G5 motif.

Belongs to the G-alpha family. G(q) subfamily. G proteins are composed of 3 units; alpha, beta and gamma. The alpha chain contains the guanine nucleotide binding site.

Guanine nucleotide-binding proteins (G proteins) are involved as modulators or transducers in various transmembrane signaling systems. Promotes transcription of 3',5'-cyclic phosphodiesterases pde-1 and pde-5, leading to reduced cGMP levels in sensory neurons. This causes suppression of insulin production and signaling which leads to increased daf-16 activity and contributes to increased adult lifespan and resistance to oxidative stress. In addition, by reducing cGMP levels, inhibits TGF-beta signaling pathways. Involved in behavioral response to P.aeruginosa by controlling the expression of daf-7, a member of the TGF-beta family, in ASJ sensory neurons. Plays a role in the avoidance response to the noxious chemical quinine in ASH sensory neurons. The protein is Guanine nucleotide-binding protein alpha-3 subunit of Caenorhabditis elegans.